A 395-amino-acid polypeptide reads, in one-letter code: Cytoplasmic 60S subunit biogenesis factor REI1 homolog 2 (395 aa).

C2H2-type zinc fingers lie at residues 4–28 (LACN…SEWH), 68–92 (YSCG…SKSH), 171–194 (ACCL…HKFH), and 222–249 (FVCL…AKGH).

It belongs to the REI1 family. In terms of assembly, can form homodimer. Interacts with RLP24, RLP24A, RPL24B, EBP1 and JJJ1.

The protein resides in the cytoplasm. Pre-60S-associated factor involved in the cytoplasmic maturation of the 60S subunit. Involved in the dissociation and recycling of other late pre-60S factors before newly synthesized large ribosomal subunits enter translation. Can complement the growth defect of a yeast mutant lacking REI1. Required for leaf growth under cold temperature conditions. The sequence is that of Cytoplasmic 60S subunit biogenesis factor REI1 homolog 2 from Arabidopsis thaliana (Mouse-ear cress).